Reading from the N-terminus, the 659-residue chain is DNA ligase (659 aa).

NAD(+)-binding positions include Asp-32–Asp-36, Ser-81–Leu-82, and Glu-110. Residue Lys-112 is the N6-AMP-lysine intermediate of the active site. NAD(+)-binding residues include Arg-133, Glu-168, Lys-284, and Lys-308. Residues Cys-402, Cys-405, Cys-420, and Cys-425 each coordinate Zn(2+). In terms of domain architecture, BRCT spans Ala-582 to Pro-659.

This sequence belongs to the NAD-dependent DNA ligase family. LigA subfamily. Requires Mg(2+) as cofactor. Mn(2+) is required as a cofactor.

The enzyme catalyses NAD(+) + (deoxyribonucleotide)n-3'-hydroxyl + 5'-phospho-(deoxyribonucleotide)m = (deoxyribonucleotide)n+m + AMP + beta-nicotinamide D-nucleotide.. DNA ligase that catalyzes the formation of phosphodiester linkages between 5'-phosphoryl and 3'-hydroxyl groups in double-stranded DNA using NAD as a coenzyme and as the energy source for the reaction. It is essential for DNA replication and repair of damaged DNA. The polypeptide is DNA ligase (Desulfitobacterium hafniense (strain DSM 10664 / DCB-2)).